A 694-amino-acid polypeptide reads, in one-letter code: Glycine--tRNA ligase beta subunit (694 aa).

Belongs to the class-II aminoacyl-tRNA synthetase family. In terms of assembly, tetramer of two alpha and two beta subunits.

The protein localises to the cytoplasm. The enzyme catalyses tRNA(Gly) + glycine + ATP = glycyl-tRNA(Gly) + AMP + diphosphate. In Lactiplantibacillus plantarum (strain ATCC BAA-793 / NCIMB 8826 / WCFS1) (Lactobacillus plantarum), this protein is Glycine--tRNA ligase beta subunit.